Consider the following 198-residue polypeptide: Probable GTP-binding protein EngB (198 aa).

The EngB-type G domain occupies 21 to 195 (NIPEVCFVGR…YDALIRLLEV (175 aa)). GTP is bound by residues 29 to 36 (GRSNVGKS), 56 to 60 (GKTRL), 75 to 78 (DAPG), 142 to 145 (TKLD), and 174 to 176 (VSN). 2 residues coordinate Mg(2+): Ser36 and Thr58.

Belongs to the TRAFAC class TrmE-Era-EngA-EngB-Septin-like GTPase superfamily. EngB GTPase family. Requires Mg(2+) as cofactor.

Necessary for normal cell division and for the maintenance of normal septation. This Mesoplasma florum (strain ATCC 33453 / NBRC 100688 / NCTC 11704 / L1) (Acholeplasma florum) protein is Probable GTP-binding protein EngB.